Here is a 498-residue protein sequence, read N- to C-terminus: ATP synthase subunit beta, chloroplastic (498 aa).

172-179 (GGAGVGKT) lines the ATP pocket.

It belongs to the ATPase alpha/beta chains family. F-type ATPases have 2 components, CF(1) - the catalytic core - and CF(0) - the membrane proton channel. CF(1) has five subunits: alpha(3), beta(3), gamma(1), delta(1), epsilon(1). CF(0) has four main subunits: a(1), b(1), b'(1) and c(9-12).

Its subcellular location is the plastid. The protein localises to the chloroplast thylakoid membrane. The enzyme catalyses ATP + H2O + 4 H(+)(in) = ADP + phosphate + 5 H(+)(out). In terms of biological role, produces ATP from ADP in the presence of a proton gradient across the membrane. The catalytic sites are hosted primarily by the beta subunits. In Illicium oligandrum (Star anise), this protein is ATP synthase subunit beta, chloroplastic.